A 904-amino-acid polypeptide reads, in one-letter code: MSHQQQQAHFDISSNSTLTTNTIATTTNASVSSSPQLNKAQMAIAEAMALKMHEEEKKKREEKKRKRDNEELLSKQVRTKLENERKKLDDSESINASTNQELYSLFNDLQMISHDHNISFDTPELVVVGMQSDGKSSFIESLLGFQFNIVETNIGTRRPLIIQMINNPSKQQPSCRFKKEDYSNSYGGSSSSTSTTSGNSNHNTDKQQNVSSSQGGGGGSNNLNEDKWEEYETPVNELTEEIIRRTNERTGRAGDRVSSIPIFLRVEFAHCSNLNIYDTPGFRKGGDERLKYEISEMVKKLIEPKNRIIVCLEQSNVEWANTISRPLVKKIDPDFSRTILVNTKFDNRVKELRNRESAHKYLEGEGIIAQKKPFFISLPLKRNLETHRFKDAMKETFLDDYRKLLEIGFDENRFGGQIGIYKVRQYVENLLHEKYQQNLLPSMLQLESICKKTEADIVRVKKELSDNNIVTLKEKVMRFVSNFNGQIERLLEGSVVGDPDEFGQTLLQEKENCSVQPWPGYNFDFDIQNSNYSLYGGAQYERLLNEFEFVIHSKEFPETSINEVASAIGVSKSHNSPIYELAATNIFQTKSKKVLLPLIDIVLQRSSYIMKRLFDISVSILGKDENESSHTVSLYEHFLKELQSQYEKFIQTIESECKSRLKDDFEMFTKIVDWNLLSGLTEIKPYNYLKVSPEETKQRVISIMDCKKLEDEPLSRSRNIDDDTYQKVCMIAGRLFSGIRFFFSKLIRNKLNAFFLDPMFQKLGSFVTDYFSKLNDQKYEEMFQLGLKELENKLHKLEFQLIDCKKNRDKFKDVYNRMKQSLNQNQNQNSSSSSNSASSSNNNVIIKHQQSLNGKFSTPDKNSLTMSPFTSPFTQSNYHQHNNNNYQINQQPLDINNDHYFDQN.

Residues 44–102 (IAEAMALKMHEEEKKKREEKKRKRDNEELLSKQVRTKLENERKKLDDSESINASTNQEL) are a coiled coil. The tract at residues 53–93 (HEEEKKKREEKKRKRDNEELLSKQVRTKLENERKKLDDSES) is disordered. The span at 67-90 (RDNEELLSKQVRTKLENERKKLDD) shows a compositional bias: basic and acidic residues. The Dynamin-type G domain occupies 119–441 (SFDTPELVVV…HEKYQQNLLP (323 aa)). The tract at residues 129–136 (GMQSDGKS) is G1 motif. 129 to 136 (GMQSDGKS) contacts GTP. The interval 155–157 (GTR) is G2 motif. Residues 169–227 (SKQQPSCRFKKEDYSNSYGGSSSSTSTTSGNSNHNTDKQQNVSSSQGGGGGSNNLNEDK) form a disordered region. The span at 183–213 (SNSYGGSSSSTSTTSGNSNHNTDKQQNVSSS) shows a compositional bias: low complexity. Residues 278–281 (DTPG) are G3 motif. GTP is bound by residues 278-282 (DTPGF) and 343-346 (TKFD). The segment at 343 to 346 (TKFD) is G4 motif. The interval 378 to 381 (LPLK) is G5 motif. Residues 781–811 (EMFQLGLKELENKLHKLEFQLIDCKKNRDKF) adopt a coiled-coil conformation. 2 disordered regions span residues 821-840 (SLNQ…ASSS) and 853-904 (NGKF…FDQN). A compositionally biased stretch (polar residues) spans 853 to 876 (NGKFSTPDKNSLTMSPFTSPFTQS). Over residues 877 to 891 (NYHQHNNNNYQINQQ) the composition is skewed to low complexity.

This sequence belongs to the TRAFAC class dynamin-like GTPase superfamily. Dynamin/Fzo/YdjA family.

The protein localises to the cytoplasm. It carries out the reaction GTP + H2O = GDP + phosphate + H(+). In terms of biological role, involved in cytokinesis. May hydrolyze GTP. This Dictyostelium discoideum (Social amoeba) protein is Dynamin-like protein C (dlpC).